Consider the following 108-residue polypeptide: MKKNTHPEYRQVLFVDSSTGYKFVCGSTYQTDKTEVFEGQEYPVCYVSISSSSHPFFTGSKKLVDAEGRVDKFLKRYSGIKQSAPKPETVVEDVLPKGKKKSPAKKKK.

The disordered stretch occupies residues 86 to 108 (KPETVVEDVLPKGKKKSPAKKKK). Basic residues predominate over residues 97–108 (KGKKKSPAKKKK).

This sequence belongs to the bacterial ribosomal protein bL31 family. Type B subfamily. As to quaternary structure, part of the 50S ribosomal subunit.

This chain is Large ribosomal subunit protein bL31B, found in Chlamydia trachomatis serovar L2 (strain ATCC VR-902B / DSM 19102 / 434/Bu).